Reading from the N-terminus, the 461-residue chain is Cysteine--tRNA ligase (461 aa).

Cysteine 28 is a binding site for Zn(2+). A 'HIGH' region motif is present at residues isoleucine 30 to histidine 40. Zn(2+)-binding residues include cysteine 209, histidine 234, and glutamate 238. The short motif at lysine 266 to serine 270 is the 'KMSKS' region element. Lysine 269 provides a ligand contact to ATP.

The protein belongs to the class-I aminoacyl-tRNA synthetase family. In terms of assembly, monomer. Zn(2+) serves as cofactor.

Its subcellular location is the cytoplasm. It carries out the reaction tRNA(Cys) + L-cysteine + ATP = L-cysteinyl-tRNA(Cys) + AMP + diphosphate. This Shigella sonnei (strain Ss046) protein is Cysteine--tRNA ligase.